Consider the following 89-residue polypeptide: Small ribosomal subunit protein uS15 (89 aa).

This sequence belongs to the universal ribosomal protein uS15 family. In terms of assembly, part of the 30S ribosomal subunit. Forms a bridge to the 50S subunit in the 70S ribosome, contacting the 23S rRNA.

Functionally, one of the primary rRNA binding proteins, it binds directly to 16S rRNA where it helps nucleate assembly of the platform of the 30S subunit by binding and bridging several RNA helices of the 16S rRNA. Forms an intersubunit bridge (bridge B4) with the 23S rRNA of the 50S subunit in the ribosome. The sequence is that of Small ribosomal subunit protein uS15 from Ralstonia nicotianae (strain ATCC BAA-1114 / GMI1000) (Ralstonia solanacearum).